Reading from the N-terminus, the 112-residue chain is Photosystem II reaction center Psb28 protein (112 aa).

The protein belongs to the Psb28 family. As to quaternary structure, part of the photosystem II complex.

It localises to the plastid. The protein resides in the cyanelle thylakoid membrane. The protein is Photosystem II reaction center Psb28 protein of Cyanophora paradoxa.